We begin with the raw amino-acid sequence, 785 residues long: Adhesion G-protein coupled receptor G7 (785 aa).

The N-terminal stretch at methionine 1 to glycine 26 is a signal peptide. Over leucine 27–serine 435 the chain is Extracellular. N-linked (GlcNAc...) asparagine glycosylation is found at asparagine 82, asparagine 122, asparagine 133, asparagine 152, asparagine 159, asparagine 178, asparagine 195, asparagine 239, asparagine 289, asparagine 348, asparagine 400, and asparagine 408. The region spanning phenylalanine 271 to tyrosine 425 is the GAIN-B domain. 2 disulfide bridges follow: cysteine 380–cysteine 407 and cysteine 395–cysteine 409. The interval cysteine 380–tyrosine 425 is GPS. The chain crosses the membrane as a helical span at residues asparagine 436–threonine 456. Residues arginine 457 to threonine 465 are Cytoplasmic-facing. The chain crosses the membrane as a helical span at residues tryptophan 466–isoleucine 486. The Extracellular segment spans residues glutamate 487–threonine 523. Residues alanine 524 to alanine 544 traverse the membrane as a helical segment. Topologically, residues threonine 545–histidine 561 are cytoplasmic. A helical membrane pass occupies residues phenylalanine 562–isoleucine 582. Residues glycine 583–serine 623 are Extracellular-facing. The chain crosses the membrane as a helical span at residues phenylalanine 624–valine 644. The Cytoplasmic portion of the chain corresponds to lysine 645–serine 668. A helical transmembrane segment spans residues threonine 669–serine 689. Residues asparagine 690–arginine 694 are Extracellular-facing. A helical membrane pass occupies residues isoleucine 695–leucine 715. Residues tyrosine 716 to serine 785 lie on the Cytoplasmic side of the membrane.

Belongs to the G-protein coupled receptor 2 family. Adhesion G-protein coupled receptor (ADGR) subfamily. As to expression, selectively expressed in the intestinal tissues.

Its subcellular location is the membrane. Orphan receptor. In Mus musculus (Mouse), this protein is Adhesion G-protein coupled receptor G7 (Adgrg7).